We begin with the raw amino-acid sequence, 361 residues long: Peptide chain release factor 1 (361 aa).

Glutamine 237 is modified (N5-methylglutamine).

This sequence belongs to the prokaryotic/mitochondrial release factor family. In terms of processing, methylated by PrmC. Methylation increases the termination efficiency of RF1.

The protein resides in the cytoplasm. In terms of biological role, peptide chain release factor 1 directs the termination of translation in response to the peptide chain termination codons UAG and UAA. The chain is Peptide chain release factor 1 from Chromohalobacter salexigens (strain ATCC BAA-138 / DSM 3043 / CIP 106854 / NCIMB 13768 / 1H11).